A 126-amino-acid polypeptide reads, in one-letter code: Glycine cleavage system H protein (126 aa).

The Lipoyl-binding domain maps to 22–104 (VATIGITEYA…YEKAWMVKIE (83 aa)). Residue lysine 63 is modified to N6-lipoyllysine.

This sequence belongs to the GcvH family. In terms of assembly, the glycine cleavage system is composed of four proteins: P, T, L and H. (R)-lipoate serves as cofactor.

The glycine cleavage system catalyzes the degradation of glycine. The H protein shuttles the methylamine group of glycine from the P protein to the T protein. In terms of biological role, is also involved in protein lipoylation via its role as an octanoyl/lipoyl carrier protein intermediate. The polypeptide is Glycine cleavage system H protein (Staphylococcus epidermidis (strain ATCC 35984 / DSM 28319 / BCRC 17069 / CCUG 31568 / BM 3577 / RP62A)).